The sequence spans 319 residues: Cobalamin biosynthesis protein CobD (319 aa).

5 consecutive transmembrane segments (helical) span residues 56–76 (VMWL…LALA), 78–98 (GIHP…ALAG), 153–173 (VDGI…LAMA), 204–224 (VANF…AVLC), and 296–316 (LMWV…YWLV).

This sequence belongs to the CobD/CbiB family.

The protein localises to the cell membrane. It participates in cofactor biosynthesis; adenosylcobalamin biosynthesis. Converts cobyric acid to cobinamide by the addition of aminopropanol on the F carboxylic group. This is Cobalamin biosynthesis protein CobD from Klebsiella pneumoniae subsp. pneumoniae (strain ATCC 700721 / MGH 78578).